We begin with the raw amino-acid sequence, 294 residues long: 4-hydroxy-tetrahydrodipicolinate synthase (294 aa).

Threonine 44 is a binding site for pyruvate. The active-site Proton donor/acceptor is the tyrosine 132. Lysine 161 functions as the Schiff-base intermediate with substrate in the catalytic mechanism. Residue isoleucine 206 coordinates pyruvate.

It belongs to the DapA family. In terms of assembly, homotetramer; dimer of dimers.

Its subcellular location is the cytoplasm. The catalysed reaction is L-aspartate 4-semialdehyde + pyruvate = (2S,4S)-4-hydroxy-2,3,4,5-tetrahydrodipicolinate + H2O + H(+). The protein operates within amino-acid biosynthesis; L-lysine biosynthesis via DAP pathway; (S)-tetrahydrodipicolinate from L-aspartate: step 3/4. Its function is as follows. Catalyzes the condensation of (S)-aspartate-beta-semialdehyde [(S)-ASA] and pyruvate to 4-hydroxy-tetrahydrodipicolinate (HTPA). The polypeptide is 4-hydroxy-tetrahydrodipicolinate synthase (Thermotoga petrophila (strain ATCC BAA-488 / DSM 13995 / JCM 10881 / RKU-1)).